The following is a 390-amino-acid chain: MGRGARVPSEAPGAGVERRWLGAALVALCLLPALVLLARLGAPAVPAWSAAQGDVAALGLSAVPPTRVPGPLAPRRRRYTLTPARLRWDHFNLTYRILSFPRNLLSPRETRRALAAAFRMWSDVSPFSFREVAPEQPSDLRIGFYPINHTDCLVSALHHCFDGPTGELAHAFFPPHGGIHFDDSEYWVLGPTRYSWKKGVWLTDLVHVAAHEIGHALGLMHSQHGRALMHLNATLRGWKALSQDELWGLHRLYGCLDRLFVCASWARRGFCDARRRLMKRLCPSSCDFCYEFPFPTVATTPPPPRTKTRLVPEGRNVTFRCGQKILHKKGKVYWYKDQEPLEFSYPGYLALGEAHLSIIANAVNEGTYTCVVRRQQRVLTTYSWRVRVRG.

Over methionine 1–arginine 19 the chain is Cytoplasmic. Positions methionine 1 to arginine 78 are excised as a propeptide. The helical; Signal-anchor for type II membrane protein transmembrane segment at tryptophan 20 to leucine 40 threads the bilayer. At glycine 41 to glycine 390 the chain is on the lumenal side. Residues asparagine 92 and asparagine 148 are each glycosylated (N-linked (GlcNAc...) asparagine). Histidine 211 lines the Zn(2+) pocket. Glutamate 212 is a catalytic residue. The Zn(2+) site is built by histidine 215 and histidine 221. Asparagine 232 is a glycosylation site (N-linked (GlcNAc...) asparagine). The 35-residue stretch at cysteine 255–cysteine 289 folds into the ShKT domain. 3 disulfide bridges follow: cysteine 255–cysteine 289, cysteine 262–cysteine 282, and cysteine 271–cysteine 286. The Ig-like C2-type domain maps to proline 295–threonine 380. The N-linked (GlcNAc...) asparagine glycan is linked to asparagine 316. A disulfide bond links cysteine 321 and cysteine 370.

Belongs to the peptidase M10A family. Zn(2+) serves as cofactor. In terms of processing, N-glycosylated. Post-translationally, proteolytic cleavage might yield an active form. In terms of tissue distribution, predominantly expressed in ovary, testis and prostate.

It is found in the endoplasmic reticulum membrane. Its subcellular location is the membrane. With respect to regulation, inhibited by TIMP2. Protease. May regulate the surface expression of some potassium channels by retaining them in the endoplasmic reticulum. The chain is Matrix metalloproteinase-23 (MMP23B) from Homo sapiens (Human).